The primary structure comprises 195 residues: Imidazoleglycerol-phosphate dehydratase (195 aa).

Belongs to the imidazoleglycerol-phosphate dehydratase family.

Its subcellular location is the cytoplasm. It carries out the reaction D-erythro-1-(imidazol-4-yl)glycerol 3-phosphate = 3-(imidazol-4-yl)-2-oxopropyl phosphate + H2O. It participates in amino-acid biosynthesis; L-histidine biosynthesis; L-histidine from 5-phospho-alpha-D-ribose 1-diphosphate: step 6/9. The protein is Imidazoleglycerol-phosphate dehydratase of Burkholderia multivorans (strain ATCC 17616 / 249).